Consider the following 467-residue polypeptide: MIRVRFAPSPTGHLHVGGLRTALFNWYFAKKNNGKFILRIEDTDMERSKKEYEDAILEEMKWVGLDYDEGVDKPGEYGPYRQSERLDIYKHYIDQLLNEEKAYFSVTKNDEIIFEGNNLLDKYKKNNDYSVVVKFKVNNDQKISFLDDVRGTIQFDTSNINDFVILRSNGIPVYNFTVVIDDYLMKISHVIRGEDHISNTPKQILIYNALSFELPKFAHLPLILGEDKSPLSKRHGEVSITYFREEGYLPKAILNYLSLLGWNANEQIFDYTEKYQEFDLKKVSRNPSIFDYTKLLWTNEVHLRNDPIEEVHKSFTEWAKYTTVKIDNEDSFVKKIIEASRAKVQTLKQLYEFSKNFFVEEFEYEEEFIEKYMKKPWFKQVIEATIRKLSEIDEYNLANVENTLKEIADLNITSRKNVFQTIRGSLLGRLVTPGLYESIIILGKNESIKRLKRALEFSNTLDINPRR.

The 'HIGH' region motif lies at 8–18 (PSPTGHLHVGG). The short motif at 230 to 234 (PLSKR) is the 'KMSKS' region element. Position 233 (Lys-233) interacts with ATP.

The protein belongs to the class-I aminoacyl-tRNA synthetase family. Glutamate--tRNA ligase type 1 subfamily. In terms of assembly, monomer.

Its subcellular location is the cytoplasm. It catalyses the reaction tRNA(Glu) + L-glutamate + ATP = L-glutamyl-tRNA(Glu) + AMP + diphosphate. Catalyzes the attachment of glutamate to tRNA(Glu) in a two-step reaction: glutamate is first activated by ATP to form Glu-AMP and then transferred to the acceptor end of tRNA(Glu). The protein is Glutamate--tRNA ligase 1 of Petrotoga mobilis (strain DSM 10674 / SJ95).